Reading from the N-terminus, the 111-residue chain is uncharacterized protein (111 aa).

It is found in the cytoplasm. The protein localises to the nucleus. This is an uncharacterized protein from Schizosaccharomyces pombe (strain 972 / ATCC 24843) (Fission yeast).